The chain runs to 421 residues: UDP-N-acetylglucosamine 1-carboxyvinyltransferase (421 aa).

A phosphoenolpyruvate-binding site is contributed by K26 to N27. R96 lines the UDP-N-acetyl-alpha-D-glucosamine pocket. D120 functions as the Proton donor in the catalytic mechanism. Residues D308 and V330 each contribute to the UDP-N-acetyl-alpha-D-glucosamine site.

The protein belongs to the EPSP synthase family. MurA subfamily.

The protein localises to the cytoplasm. It carries out the reaction phosphoenolpyruvate + UDP-N-acetyl-alpha-D-glucosamine = UDP-N-acetyl-3-O-(1-carboxyvinyl)-alpha-D-glucosamine + phosphate. Its pathway is cell wall biogenesis; peptidoglycan biosynthesis. Its function is as follows. Cell wall formation. Adds enolpyruvyl to UDP-N-acetylglucosamine. The polypeptide is UDP-N-acetylglucosamine 1-carboxyvinyltransferase (Corynebacterium efficiens (strain DSM 44549 / YS-314 / AJ 12310 / JCM 11189 / NBRC 100395)).